The following is a 154-amino-acid chain: Ribonuclease H (154 aa).

The 143-residue stretch at G5–E147 folds into the RNase H type-1 domain. D14, E53, D75, and D139 together coordinate Mg(2+).

This sequence belongs to the RNase H family. In terms of assembly, monomer. Mg(2+) serves as cofactor.

Its subcellular location is the cytoplasm. It catalyses the reaction Endonucleolytic cleavage to 5'-phosphomonoester.. In terms of biological role, endonuclease that specifically degrades the RNA of RNA-DNA hybrids. This Anaplasma marginale (strain St. Maries) protein is Ribonuclease H.